A 326-amino-acid polypeptide reads, in one-letter code: Aquaporin-3 (326 aa).

Helical transmembrane passes span 24-44 (LAEF…IITA) and 64-84 (LAFG…GISG). An NPA 1 motif is present at residues 88–90 (NPA). The chain crosses the membrane as a helical span at residues 107 to 127 (LVYIFMQYMGAFFAASILYAV). N-linked (GlcNAc...) asparagine glycosylation occurs at asparagine 146. The next 2 membrane-spanning stretches (helical) occupy residues 166–186 (IFDA…IIDP) and 196–216 (IPLY…YNAG). The NPA 2 motif lies at 220–222 (NPA). The chain crosses the membrane as a helical span at residues 247–267 (LWWLVPVIGPHVGGLLGGVTY). Residue asparagine 294 is glycosylated (N-linked (GlcNAc...) asparagine).

Belongs to the MIP/aquaporin (TC 1.A.8) family.

It is found in the cell membrane. Its function is as follows. Aquaglyceroporin that may modulate the water content and osmolytes during anhydrobiosis. The sequence is that of Aquaporin-3 from Milnesium tardigradum (Water bear).